A 494-amino-acid chain; its full sequence is UPF0371 protein SpyM3_1021 (494 aa).

It belongs to the UPF0371 family.

The protein is UPF0371 protein SpyM3_1021 of Streptococcus pyogenes serotype M3 (strain ATCC BAA-595 / MGAS315).